We begin with the raw amino-acid sequence, 179 residues long: Ribosome maturation factor RimM (179 aa).

In terms of domain architecture, PRC barrel spans D96 to Y179.

This sequence belongs to the RimM family. In terms of assembly, binds ribosomal protein uS19.

It localises to the cytoplasm. Its function is as follows. An accessory protein needed during the final step in the assembly of 30S ribosomal subunit, possibly for assembly of the head region. Essential for efficient processing of 16S rRNA. May be needed both before and after RbfA during the maturation of 16S rRNA. It has affinity for free ribosomal 30S subunits but not for 70S ribosomes. In Janthinobacterium sp. (strain Marseille) (Minibacterium massiliensis), this protein is Ribosome maturation factor RimM.